Consider the following 448-residue polypeptide: Glucose-6-phosphate isomerase (448 aa).

Glutamate 290 acts as the Proton donor in catalysis. Active-site residues include histidine 311 and lysine 425.

The protein belongs to the GPI family.

It is found in the cytoplasm. It catalyses the reaction alpha-D-glucose 6-phosphate = beta-D-fructose 6-phosphate. It functions in the pathway carbohydrate biosynthesis; gluconeogenesis. It participates in carbohydrate degradation; glycolysis; D-glyceraldehyde 3-phosphate and glycerone phosphate from D-glucose: step 2/4. Its function is as follows. Catalyzes the reversible isomerization of glucose-6-phosphate to fructose-6-phosphate. The sequence is that of Glucose-6-phosphate isomerase from Lactococcus lactis subsp. lactis (strain IL1403) (Streptococcus lactis).